Reading from the N-terminus, the 662-residue chain is Protein transport Sec1b (662 aa).

The protein belongs to the STXBP/unc-18/SEC1 family.

Its function is as follows. Involved in the vesicle trafficking. Binds syntaxins. The chain is Protein transport Sec1b (SEC1B) from Arabidopsis thaliana (Mouse-ear cress).